Consider the following 579-residue polypeptide: Pre-mRNA-processing protein 45 (579 aa).

4 disordered regions span residues 1–64 (MTSV…GWRP), 218–254 (QQDP…LTAE), 343–414 (QKAR…TERR), and 521–579 (AAEA…VDDD). The span at 234-245 (RGPPSPPPPIMH) shows a compositional bias: pro residues. Residues 343-359 (QKAREERAASNRRDSRA) show a composition bias toward basic and acidic residues. Residues 366-379 (ASRSPSAYSRSATP) are compositionally biased toward low complexity. 3 stretches are compositionally biased toward basic and acidic residues: residues 386–414 (ARER…TERR), 521–538 (AAEA…KDTT), and 563–579 (EVER…VDDD).

Belongs to the SNW family. Associated with the spliceosome.

The protein resides in the nucleus. Functionally, involved in pre-mRNA splicing. The sequence is that of Pre-mRNA-processing protein 45 (prp45) from Aspergillus fumigatus (strain ATCC MYA-4609 / CBS 101355 / FGSC A1100 / Af293) (Neosartorya fumigata).